A 910-amino-acid polypeptide reads, in one-letter code: MDYSRCCGSTNSRVIYMNIDEKWQNAWERDHVFEPKIDERKKFMITVPWPYTNGSLHVGHGRTYTLGDIIARYKRSRNYNVLFPMGFHQSGTPILAFSERIRAGDASTIALYRSYLSEYGEKDIDGWLEKFKDPRNIADYFSNAIINDFKHLGYSIDWTRKFTSADEFYQNVVKWQFHKLNEKGLIKQDKYPILYSIDDDNAVGEDDIKDGDTDKVSVEEYTAVFFESNSYSLIAASLRPETLFGVTNIWINPTGEYVKIKIGDKIAVVSKEAVDKLKYQRNDVSVIGPISAESIQRKKFTTPFGKEVPVYKADFVDTDNGTGVVYSVPSHSVYDFVYYRRKKSGQTPVVIEAPLKMPEVEIKFDLNSKEGLDEATKELYKSEFYYGKLVNSGEYTGLTVRDAREKIKKDLIGSGKAIIFYETSRKAVTRGGSKVIVAVLPDQWFIDYSADWLKKLSHDMLNRMMIYPEMYRNVMNDAIDWLKERPCARRRGLGTKLPFDDRWVIESLSDSTIYPAVYTTSIQMRKLYENGKLDENAIERIFDGGEVQNDEERTARNEFSYWYPVDIRLTAVPHISNHLSFYVMNHAAIFPPEKWPSGLIISGLVVSNGAKISKSKGNVVSLLEITKKYSADIYRLYVAVQADVSSTMDWNENDLSNIVRRFNEFKTIMDSFKPDTSELNFEETWFVSRFAERLKQFMDQMDGFQIRDAYINIFYGTLNDLKYAVNRGASQNRSLASIIADWLRALMPVISHHAEEYWHRYVSNTYVSINPFDDNFAEKYERLAKVYGLSTSEFYQVMDYVEHIIQDINNIISVTGIEPKSVEITVANEDVIKASREFLSNSVSERSKRYLQYLAKRRKDIVVYPFNEIDILRRNSSYISRQVKADVSINTGDIINGKIAVPGKPVIHIT.

The 'HIGH' region motif lies at Pro-50–His-60. Residues Lys-611–Ser-615 carry the 'KMSKS' region motif. Lys-614 serves as a coordination point for ATP.

This sequence belongs to the class-I aminoacyl-tRNA synthetase family.

It is found in the cytoplasm. It carries out the reaction tRNA(Leu) + L-leucine + ATP = L-leucyl-tRNA(Leu) + AMP + diphosphate. The polypeptide is Leucine--tRNA ligase (Thermoplasma volcanium (strain ATCC 51530 / DSM 4299 / JCM 9571 / NBRC 15438 / GSS1)).